The chain runs to 85 residues: Small ribosomal subunit protein uS17 (85 aa).

Belongs to the universal ribosomal protein uS17 family. In terms of assembly, part of the 30S ribosomal subunit.

In terms of biological role, one of the primary rRNA binding proteins, it binds specifically to the 5'-end of 16S ribosomal RNA. In Anaeromyxobacter dehalogenans (strain 2CP-1 / ATCC BAA-258), this protein is Small ribosomal subunit protein uS17.